The following is a 207-amino-acid chain: MIQGTLYIVSAPSGAGKSSLIQALLKTQPLYDTQVSISHTTRAMRPGEAHGQHYFFVPVAEFEHMIAEDAFLEYARVFDNYYGTSREAIQQVLATGVDVFLDIDWQGAQQIRAKMPDARSIFVLPPSKEELDRRLRGRDQDSEEVIGRRMAQAVAEMTHFAEYDYLIVNDDFNTALLDLKTIIRAERLRLGRQKLHHDALISKLLAD.

Residues 4 to 184 (GTLYIVSAPS…ALLDLKTIIR (181 aa)) form the Guanylate kinase-like domain. Position 11–18 (11–18 (APSGAGKS)) interacts with ATP.

It belongs to the guanylate kinase family.

It localises to the cytoplasm. The catalysed reaction is GMP + ATP = GDP + ADP. Essential for recycling GMP and indirectly, cGMP. This Sodalis glossinidius (strain morsitans) protein is Guanylate kinase.